The following is a 491-amino-acid chain: Monocarboxylate transport permease protein (491 aa).

13 consecutive transmembrane segments (helical) span residues 7-27, 55-75, 83-103, 130-150, 157-177, 187-207, 246-266, 277-297, 322-342, 374-396, 400-422, 427-447, and 465-485; these read GTALAVFIFFFVLVTVMGFVA, WFLVGGDFYTAYTVIAVPALV, FFALPYTIVVYPFVFMVMPVL, LAVAATGVIATMPYIALQLVG, ALGLHGELPLAIAFIVLALYT, LIAFVKDIMIYIVVIAAVALI, LALGSALAAFMYPHTLTGIFA, AIMLPAYTLLLGLLALLGYMG, WFSGFAFAAIAIGALVPAAVM, ITSLVVKVGALLVIIFLPTQFAL, LLGGIWILQTLPALVFGLYTNWF, LLAGWFVGFGGGTFLVWDAGW, and GLLALAANIAVAVVVNALLPA.

Belongs to the sodium:solute symporter (SSF) (TC 2.A.21) family.

It localises to the cell membrane. With respect to regulation, inhibited by CCCP, but is apparently not affected by the concentration of sodium. Its function is as follows. Low-affinity transporter of alanine and high-affinity transporter of lactate and pyruvate. Can also transport other monocarboxylates such as propionate, butyrate, alpha-hydroxybutyrate or acetate. May be proton coupled. Required for optimal growth on alanine or pyruvate and ammonia. The protein is Monocarboxylate transport permease protein of Rhizobium johnstonii (strain DSM 114642 / LMG 32736 / 3841) (Rhizobium leguminosarum bv. viciae).